The following is a 297-amino-acid chain: XIAP-associated factor 1 (297 aa).

Residues 22-99 (LHEAHCLMYL…QLAVRLNKVD (78 aa)) form a TRAF-type zinc finger. A disordered region spans residues 178–255 (AVTPSPVGKP…NGKLRASSPV (78 aa)). The span at 202 to 212 (QTSKAEKDVRP) shows a compositional bias: basic and acidic residues. Over residues 229–245 (RQAPRGTNKTTNLSLKS) the composition is skewed to polar residues.

Interacts with BIRC1, BIRC2, BIRC3, BIRC4, BIRC7 and BIRC8. Part of an complex consisting of BIRC4, XAF1 and BIRC5; the complex formation requires IFN-beta stimulation. Interacts with RNF114, the interaction increases XAF1 stability and proapoptotic effects, and may regulate IFN signaling.

Its subcellular location is the cytoplasm. It localises to the nucleus. It is found in the mitochondrion. Functionally, seems to function as a negative regulator of members of the IAP (inhibitor of apoptosis protein) family. Inhibits anti-caspase activity of BIRC4. Induces cleavage and inactivation of BIRC4 independent of caspase activation. Mediates TNF-alpha-induced apoptosis and is involved in apoptosis in trophoblast cells. May inhibit BIRC4 indirectly by activating the mitochondrial apoptosis pathway. After translocation to mitochondria, promotes translocation of BAX to mitochondria and cytochrome c release from mitochondria. Seems to promote the redistribution of BIRC4 from the cytoplasm to the nucleus, probably independent of BIRC4 inactivation which seems to occur in the cytoplasm. The BIRC4-XAF1 complex mediates down-regulation of BIRC5/survivin; the process requires the E3 ligase activity of BIRC4. Seems to be involved in cellular sensitivity to the proapoptotic actions of TRAIL. May be a tumor suppressor by mediating apoptosis resistance of cancer cells. The sequence is that of XIAP-associated factor 1 (XAF1) from Bos taurus (Bovine).